The chain runs to 213 residues: Superoxide dismutase [Fe] (213 aa).

H28, H82, D164, and H168 together coordinate Fe cation.

The protein belongs to the iron/manganese superoxide dismutase family. Homotetramer. Requires Fe cation as cofactor.

It carries out the reaction 2 superoxide + 2 H(+) = H2O2 + O2. Functionally, destroys superoxide anion radicals which are normally produced within the cells and which are toxic to biological systems. The sequence is that of Superoxide dismutase [Fe] (sodB) from Aquifex pyrophilus.